The following is a 354-amino-acid chain: RH-like protein (354 aa).

Transmembrane regions (helical) follow at residues 11-31 (GCLP…FFFF), 45-65 (VATY…LGFL), 77-97 (VAFN…LDGF), 125-145 (ISVG…MVLV), 167-187 (VNIM…AWCL), 209-229 (AMLG…ALLT), 238-258 (VFNT…VSSL), and 287-307 (LISS…ISIG).

The protein belongs to the ammonium transporter (TC 2.A.49) family. Rh subfamily.

It is found in the membrane. In terms of biological role, may be part of an oligomeric complex which is likely to have a transport or channel function in the erythrocyte membrane. The protein is RH-like protein of Hylobates pileatus (Pileated gibbon).